A 432-amino-acid chain; its full sequence is Phosphomethylpyrimidine synthase (432 aa).

Substrate contacts are provided by residues Asn-66, Met-95, Tyr-124, His-163, 185-187, 226-229, and Glu-265; these read SRG and DGLR. Zn(2+) is bound at residue His-269. Position 292 (Tyr-292) interacts with substrate. His-333 contacts Zn(2+). [4Fe-4S] cluster-binding residues include Cys-409, Cys-412, and Cys-416.

Belongs to the ThiC family. [4Fe-4S] cluster serves as cofactor.

It carries out the reaction 5-amino-1-(5-phospho-beta-D-ribosyl)imidazole + S-adenosyl-L-methionine = 4-amino-2-methyl-5-(phosphooxymethyl)pyrimidine + CO + 5'-deoxyadenosine + formate + L-methionine + 3 H(+). Its pathway is cofactor biosynthesis; thiamine diphosphate biosynthesis. In terms of biological role, catalyzes the synthesis of the hydroxymethylpyrimidine phosphate (HMP-P) moiety of thiamine from aminoimidazole ribotide (AIR) in a radical S-adenosyl-L-methionine (SAM)-dependent reaction. This chain is Phosphomethylpyrimidine synthase, found in Moorella thermoacetica (strain ATCC 39073 / JCM 9320).